The chain runs to 175 residues: Methylated-DNA--protein-cysteine methyltransferase (175 aa).

The active-site Nucleophile; methyl group acceptor is the Cys-142.

Belongs to the MGMT family.

It is found in the cytoplasm. It carries out the reaction a 6-O-methyl-2'-deoxyguanosine in DNA + L-cysteinyl-[protein] = S-methyl-L-cysteinyl-[protein] + a 2'-deoxyguanosine in DNA. The catalysed reaction is a 4-O-methyl-thymidine in DNA + L-cysteinyl-[protein] = a thymidine in DNA + S-methyl-L-cysteinyl-[protein]. In terms of biological role, involved in the cellular defense against the biological effects of O6-methylguanine (O6-MeG) and O4-methylthymine (O4-MeT) in DNA. Repairs the methylated nucleobase in DNA by stoichiometrically transferring the methyl group to a cysteine residue in the enzyme. This is a suicide reaction: the enzyme is irreversibly inactivated. This is Methylated-DNA--protein-cysteine methyltransferase from Thermococcus sibiricus (strain DSM 12597 / MM 739).